The following is a 181-amino-acid chain: Oligoribonuclease (181 aa).

One can recognise an Exonuclease domain in the interval 8 to 171 (LIWIDLEMTG…DDIRESIAEL (164 aa)). Tyr-129 is an active-site residue.

The protein belongs to the oligoribonuclease family.

The protein resides in the cytoplasm. 3'-to-5' exoribonuclease specific for small oligoribonucleotides. In Alcanivorax borkumensis (strain ATCC 700651 / DSM 11573 / NCIMB 13689 / SK2), this protein is Oligoribonuclease.